Reading from the N-terminus, the 505-residue chain is ATP synthase subunit alpha (505 aa).

171–178 (GDRQTGKT) contributes to the ATP binding site.

It belongs to the ATPase alpha/beta chains family. F-type ATPases have 2 components, CF(1) - the catalytic core - and CF(0) - the membrane proton channel. CF(1) has five subunits: alpha(3), beta(3), gamma(1), delta(1), epsilon(1). CF(0) has three main subunits: a(1), b(2) and c(9-12). The alpha and beta chains form an alternating ring which encloses part of the gamma chain. CF(1) is attached to CF(0) by a central stalk formed by the gamma and epsilon chains, while a peripheral stalk is formed by the delta and b chains.

The protein localises to the cell inner membrane. It catalyses the reaction ATP + H2O + 4 H(+)(in) = ADP + phosphate + 5 H(+)(out). In terms of biological role, produces ATP from ADP in the presence of a proton gradient across the membrane. The alpha chain is a regulatory subunit. The chain is ATP synthase subunit alpha from Aliarcobacter butzleri (strain RM4018) (Arcobacter butzleri).